The sequence spans 317 residues: Methionyl-tRNA formyltransferase (317 aa).

109–112 (SLLP) contributes to the (6S)-5,6,7,8-tetrahydrofolate binding site.

Belongs to the Fmt family.

The enzyme catalyses L-methionyl-tRNA(fMet) + (6R)-10-formyltetrahydrofolate = N-formyl-L-methionyl-tRNA(fMet) + (6S)-5,6,7,8-tetrahydrofolate + H(+). Functionally, attaches a formyl group to the free amino group of methionyl-tRNA(fMet). The formyl group appears to play a dual role in the initiator identity of N-formylmethionyl-tRNA by promoting its recognition by IF2 and preventing the misappropriation of this tRNA by the elongation apparatus. The protein is Methionyl-tRNA formyltransferase of Desulforamulus reducens (strain ATCC BAA-1160 / DSM 100696 / MI-1) (Desulfotomaculum reducens).